We begin with the raw amino-acid sequence, 255 residues long: Tachylectin-2 (255 aa).

Positions 1–19 (MKFLLVVLGFIGFLKDGIT) are cleaved as a signal peptide. WD repeat units follow at residues 20 to 67 (VGGE…FLFL), 68 to 114 (SPGG…FLFF), 115 to 161 (DPNG…FLFF), 162 to 208 (HPNG…FLFF), and 209 to 255 (SSVG…FLFF).

As to quaternary structure, monomer.

The protein resides in the secreted. It is found in the cytoplasmic granule. In terms of biological role, lectin that binds specifically to N-acetylglucosamine and N-acetylgalactosamine. Is part of the innate immunity host defense system of the horseshoe crab. This is Tachylectin-2 from Tachypleus tridentatus (Japanese horseshoe crab).